The chain runs to 557 residues: Formate--tetrahydrofolate ligase (557 aa).

66–73 (TPAGEGKS) provides a ligand contact to ATP.

It belongs to the formate--tetrahydrofolate ligase family.

The enzyme catalyses (6S)-5,6,7,8-tetrahydrofolate + formate + ATP = (6R)-10-formyltetrahydrofolate + ADP + phosphate. It participates in one-carbon metabolism; tetrahydrofolate interconversion. The chain is Formate--tetrahydrofolate ligase from Clostridium botulinum (strain Loch Maree / Type A3).